A 147-amino-acid chain; its full sequence is Lysozyme C-1 (147 aa).

Positions 1 to 18 (MKALIILGLLCLSVAVQG) are cleaved as a signal peptide. A C-type lysozyme domain is found at 19–147 (KVFERCELAR…VSSYVEGCSL (129 aa)). 4 cysteine pairs are disulfide-bonded: Cys-24–Cys-145, Cys-48–Cys-133, Cys-83–Cys-99, and Cys-95–Cys-113. Residues Glu-53 and Asp-71 contribute to the active site.

This sequence belongs to the glycosyl hydrolase 22 family. Monomer. Expressed in stomach.

The protein localises to the secreted. The catalysed reaction is Hydrolysis of (1-&gt;4)-beta-linkages between N-acetylmuramic acid and N-acetyl-D-glucosamine residues in a peptidoglycan and between N-acetyl-D-glucosamine residues in chitodextrins.. Functionally, lysozymes have primarily a bacteriolytic function; those in tissues and body fluids are associated with the monocyte-macrophage system and enhance the activity of immunoagents. The polypeptide is Lysozyme C-1 (Ovis aries (Sheep)).